The chain runs to 84 residues: Small ribosomal subunit protein uS17 (84 aa).

This sequence belongs to the universal ribosomal protein uS17 family. In terms of assembly, part of the 30S ribosomal subunit.

In terms of biological role, one of the primary rRNA binding proteins, it binds specifically to the 5'-end of 16S ribosomal RNA. This Vibrio cholerae serotype O1 (strain ATCC 39541 / Classical Ogawa 395 / O395) protein is Small ribosomal subunit protein uS17.